Reading from the N-terminus, the 206-residue chain is Dephospho-CoA kinase (206 aa).

Residues Val4 to Asp204 enclose the DPCK domain. Ala12 to Thr17 is an ATP binding site.

This sequence belongs to the CoaE family.

The protein resides in the cytoplasm. The catalysed reaction is 3'-dephospho-CoA + ATP = ADP + CoA + H(+). The protein operates within cofactor biosynthesis; coenzyme A biosynthesis; CoA from (R)-pantothenate: step 5/5. Catalyzes the phosphorylation of the 3'-hydroxyl group of dephosphocoenzyme A to form coenzyme A. The polypeptide is Dephospho-CoA kinase (Staphylococcus saprophyticus subsp. saprophyticus (strain ATCC 15305 / DSM 20229 / NCIMB 8711 / NCTC 7292 / S-41)).